We begin with the raw amino-acid sequence, 252 residues long: Protein BTG3 (252 aa).

A disordered region spans residues valine 138–serine 162.

Belongs to the BTG family. Ubiquitous. High expression in the ventricular zone of the developing central nervous system. High in ovary, testis, prostate, thymus and lung.

Its function is as follows. Overexpression impairs serum-induced cell cycle progression from the G0/G1 to S phase. The protein is Protein BTG3 (BTG3) of Homo sapiens (Human).